The following is a 134-amino-acid chain: UPF0102 protein SYNW1051 (134 aa).

The protein belongs to the UPF0102 family.

The polypeptide is UPF0102 protein SYNW1051 (Parasynechococcus marenigrum (strain WH8102)).